The sequence spans 108 residues: uncharacterized protein (108 aa).

The span at 1–12 shows a compositional bias: polar residues; the sequence is MSNQQKQLQLPS. The disordered stretch occupies residues 1–22; that stretch reads MSNQQKQLQLPSASIKKPKEKQ.

This is an uncharacterized protein from Dictyostelium discoideum (Social amoeba).